A 264-amino-acid polypeptide reads, in one-letter code: Proliferating cell nuclear antigen 2 (264 aa).

The DNA-binding element occupies 61–80 (RCDRNLSMGMNLGNMSKMLK).

Belongs to the PCNA family. Homo- and heterotrimer. Interacts with POLH, ATXR5 and ATXR6.

The protein localises to the nucleus. This protein is an auxiliary protein of DNA polymerase delta and is involved in the control of eukaryotic DNA replication by increasing the polymerase's processibility during elongation of the leading strand. May be involved in UV resistance. The sequence is that of Proliferating cell nuclear antigen 2 (PCNA2) from Arabidopsis thaliana (Mouse-ear cress).